A 394-amino-acid chain; its full sequence is 1-acylglycerol-3-phosphate O-acyltransferase ICT1 (394 aa).

Positions 74–381 constitute an AB hydrolase-1 domain; the sequence is VLIHGYAASS…AGHNLFLDNP (308 aa). The HXXXXD motif signature appears at 374–379; sequence HNLFLD.

The protein belongs to the peptidase S33 family. ABHD4/ABHD5 subfamily.

The catalysed reaction is a 1-acyl-sn-glycero-3-phosphate + an acyl-CoA = a 1,2-diacyl-sn-glycero-3-phosphate + CoA. Lysophosphatidic acid acyltransferase involved in membrane remodeling leading to increased organic solvent tolerance. Involved in resistance to azoles and copper. The chain is 1-acylglycerol-3-phosphate O-acyltransferase ICT1 (ICT1) from Saccharomyces cerevisiae (strain ATCC 204508 / S288c) (Baker's yeast).